A 376-amino-acid chain; its full sequence is 5-hydroxytryptamine receptor 1D (376 aa).

Residues 1–22 (MSPPNQSEEGLPQEASNRSLNA) are disordered. Residues asparagine 5, asparagine 17, and asparagine 21 are each glycosylated (N-linked (GlcNAc...) asparagine). The next 3 helical transmembrane spans lie at 39–64 (VSLV…TTIL), 76–97 (LIGS…ISIA), and 110–134 (LCDI…VIAL). A disulfide bridge links cysteine 111 with cysteine 188. Serotonin-binding residues include aspartate 118 and cysteine 122. The DRY motif; important for ligand-induced conformation changes signature appears at 135–137 (DRY). 4 helical membrane passes run 155-176 (AGAM…PLFW), 195-218 (ISYT…ILYS), 300-325 (KTLG…VLPI), and 335-358 (ALFD…YTVF). Serine 320 is a serotonin binding site. The short motif at 351–355 (NPIIY) is the NPxxY motif; important for ligand-induced conformation changes and signaling element.

This sequence belongs to the G-protein coupled receptor 1 family. Homodimer. Heterodimer with HTR1B.

It is found in the cell membrane. G-protein coupled receptor for 5-hydroxytryptamine (serotonin). Also functions as a receptor for ergot alkaloid derivatives, various anxiolytic and antidepressant drugs and other psychoactive substances. Ligand binding causes a conformation change that triggers signaling via guanine nucleotide-binding proteins (G proteins) and modulates the activity of downstream effectors, such as adenylate cyclase. HTR1D is coupled to G(i)/G(o) G alpha proteins and mediates inhibitory neurotransmission by inhibiting adenylate cyclase activity. Regulates the release of 5-hydroxytryptamine in the brain, and thereby affects neural activity. May also play a role in regulating the release of other neurotransmitters. May play a role in vasoconstriction. In Cavia porcellus (Guinea pig), this protein is 5-hydroxytryptamine receptor 1D (HTR1D).